The chain runs to 235 residues: Probable septum site-determining protein MinC (235 aa).

Residues 104–125 are disordered; the sequence is KAVRPAPVEPATPSEPPQNANP. Residues 110–119 show a composition bias toward pro residues; that stretch reads PVEPATPSEP.

It belongs to the MinC family. In terms of assembly, interacts with MinD and FtsZ.

Functionally, cell division inhibitor that blocks the formation of polar Z ring septums. Rapidly oscillates between the poles of the cell to destabilize FtsZ filaments that have formed before they mature into polar Z rings. Prevents FtsZ polymerization. The chain is Probable septum site-determining protein MinC from Salmonella enteritidis PT4 (strain P125109).